We begin with the raw amino-acid sequence, 474 residues long: Cysteine--tRNA ligase (474 aa).

Residue C27 coordinates Zn(2+). The short motif at 29-39 (PTVYNYIHIGN) is the 'HIGH' region element. Positions 212, 237, and 241 each coordinate Zn(2+). Residues 271 to 275 (KMSKS) carry the 'KMSKS' region motif. Residue K274 coordinates ATP.

The protein belongs to the class-I aminoacyl-tRNA synthetase family. Monomer. Requires Zn(2+) as cofactor.

Its subcellular location is the cytoplasm. It catalyses the reaction tRNA(Cys) + L-cysteine + ATP = L-cysteinyl-tRNA(Cys) + AMP + diphosphate. In Lactobacillus delbrueckii subsp. bulgaricus (strain ATCC 11842 / DSM 20081 / BCRC 10696 / JCM 1002 / NBRC 13953 / NCIMB 11778 / NCTC 12712 / WDCM 00102 / Lb 14), this protein is Cysteine--tRNA ligase.